A 110-amino-acid chain; its full sequence is Integration host factor subunit alpha (110 aa).

It belongs to the bacterial histone-like protein family. In terms of assembly, heterodimer of an alpha and a beta chain.

In terms of biological role, this protein is one of the two subunits of integration host factor, a specific DNA-binding protein that functions in genetic recombination as well as in transcriptional and translational control. The chain is Integration host factor subunit alpha from Methylococcus capsulatus (strain ATCC 33009 / NCIMB 11132 / Bath).